Reading from the N-terminus, the 352-residue chain is Phosphoribosylformylglycinamidine cyclo-ligase (352 aa).

The protein belongs to the AIR synthase family.

It localises to the cytoplasm. The enzyme catalyses 2-formamido-N(1)-(5-O-phospho-beta-D-ribosyl)acetamidine + ATP = 5-amino-1-(5-phospho-beta-D-ribosyl)imidazole + ADP + phosphate + H(+). It participates in purine metabolism; IMP biosynthesis via de novo pathway; 5-amino-1-(5-phospho-D-ribosyl)imidazole from N(2)-formyl-N(1)-(5-phospho-D-ribosyl)glycinamide: step 2/2. The sequence is that of Phosphoribosylformylglycinamidine cyclo-ligase from Ectopseudomonas mendocina (strain ymp) (Pseudomonas mendocina).